Reading from the N-terminus, the 211-residue chain is ATP-dependent Clp protease proteolytic subunit (211 aa).

S106 acts as the Nucleophile in catalysis. The active site involves H131.

It belongs to the peptidase S14 family. Fourteen ClpP subunits assemble into 2 heptameric rings which stack back to back to give a disk-like structure with a central cavity, resembling the structure of eukaryotic proteasomes.

The protein localises to the cytoplasm. The catalysed reaction is Hydrolysis of proteins to small peptides in the presence of ATP and magnesium. alpha-casein is the usual test substrate. In the absence of ATP, only oligopeptides shorter than five residues are hydrolyzed (such as succinyl-Leu-Tyr-|-NHMec, and Leu-Tyr-Leu-|-Tyr-Trp, in which cleavage of the -Tyr-|-Leu- and -Tyr-|-Trp bonds also occurs).. Its function is as follows. Cleaves peptides in various proteins in a process that requires ATP hydrolysis. Has a chymotrypsin-like activity. Plays a major role in the degradation of misfolded proteins. The sequence is that of ATP-dependent Clp protease proteolytic subunit from Maricaulis maris (strain MCS10) (Caulobacter maris).